The chain runs to 412 residues: Burnettramic acids biosynthesis cluster protein E (412 aa).

Disordered regions lie at residues 1–66 (MAIA…KKIR), 308–342 (RNPT…SLAT), and 386–412 (SRAE…AAKG). Over residues 36-58 (EDEQWALDELQDELCQEEPSDSE) the composition is skewed to acidic residues. The segment covering 395–404 (EATTEPSVQS) has biased composition (polar residues).

It functions in the pathway mycotoxin biosynthesis. Functionally, part of the gene cluster that mediates the biosynthesis of burnettramic acids, an unusual class of bolaamphiphilic pyrrolizidinediones that display potent antibacterial, antifungal, and cytotoxic activities. The first step of the biosynthesis of burnettramic acids is the hydroxylation of proline by the proline hydroxylase buaE to generate 4-hydroxyproline. The PKS-NRPS buaA and trans-enoyl reductase buaC construct the highly reduced polyketide chain, and the condensation (C) domain of buaA then catalyzes the amide bond formation with the activated 4-hydroxyproline. This is followed by the R domain releasing the nascent polyketide-peptide directly via a Dieckmann condensation to afford a tetramic acid fused to the hydroxyproline, generating the bicyclic pyrrolidinedione moiety. The cytochrome P450 monooxygenases buaD and buaG are likely responsible for the multiple hydroxylations on the polyketide chain and its terminus, although in the heterologous context, buaD does not appear to be required. Therefore, while buaG may be a multifunctional cytochrome P450 monooxygenase, it cannot be ruled out that the two secondary alcohols on the polyketide chain could have an acetate origin. Finally, the glycosyltransferase buaB transfers beta-D-mannose to the aglycone burnettramic acid A to form burnettramic acid A. Burnettramic acid B is a minor cis-pyrrolizidine epimer of burnettramic acid A and it is likely that small amounts of it form naturally in acidic environments. The role of the uncharacterized protein buaF in the biosynthesis of burnettramic acids has still to be determined. The protein is Burnettramic acids biosynthesis cluster protein E of Petromyces alliaceus (Aspergillus alliaceus).